Consider the following 189-residue polypeptide: Peptidyl-tRNA hydrolase (189 aa).

Tyrosine 14 is a binding site for tRNA. The active-site Proton acceptor is the histidine 19. TRNA contacts are provided by tyrosine 64, asparagine 66, and asparagine 112.

This sequence belongs to the PTH family. In terms of assembly, monomer.

It localises to the cytoplasm. It carries out the reaction an N-acyl-L-alpha-aminoacyl-tRNA + H2O = an N-acyl-L-amino acid + a tRNA + H(+). In terms of biological role, hydrolyzes ribosome-free peptidyl-tRNAs (with 1 or more amino acids incorporated), which drop off the ribosome during protein synthesis, or as a result of ribosome stalling. Its function is as follows. Catalyzes the release of premature peptidyl moieties from peptidyl-tRNA molecules trapped in stalled 50S ribosomal subunits, and thus maintains levels of free tRNAs and 50S ribosomes. In Clostridium botulinum (strain Okra / Type B1), this protein is Peptidyl-tRNA hydrolase.